The chain runs to 993 residues: UPF0182 protein MAV_4137 (993 aa).

7 helical membrane-spanning segments follow: residues 18–38, 63–83, 113–133, 175–195, 210–230, 254–274, and 287–307; these read ILIL…RLID, FVVF…GLAV, LVSI…AQSY, FVAV…FGGI, IQLV…YWLD, AVLP…AAVF, and IGLV…PLIV. Residues 903-941 form a disordered region; it reads NIQPTEGGAPAASPPANAPAPAVTPGSAPPVAAPPVPDG. Residues 929 to 939 show a composition bias toward pro residues; the sequence is SAPPVAAPPVP.

This sequence belongs to the UPF0182 family.

The protein resides in the cell membrane. This chain is UPF0182 protein MAV_4137, found in Mycobacterium avium (strain 104).